The primary structure comprises 486 residues: Matrilin-3 (486 aa).

Positions 1-28 (MPRPAPARRLPGLLLLLWPLLLLPSAAP) are cleaved as a signal peptide. The segment at 32 to 75 (ARPGFRRLETRGPGGSPGRRPSPAAPDGAPASGTSEPGRARGAG) is disordered. Positions 49 to 64 (GRRPSPAAPDGAPASG) are enriched in low complexity. The VWFA domain occupies 83–258 (DLVFIIDSSR…GVIEKLSSRF (176 aa)). The residue at position 198 (arginine 198) is an Omega-N-methylarginine. EGF-like domains follow at residues 264-305 (ALDP…KTCS), 306-347 (ALDR…KTCS), 348-389 (AQDK…KTCS), and 390-431 (VRDK…KTCS). 12 cysteine pairs are disulfide-bonded: cysteine 268-cysteine 279, cysteine 275-cysteine 289, cysteine 291-cysteine 304, cysteine 310-cysteine 321, cysteine 317-cysteine 331, cysteine 333-cysteine 346, cysteine 352-cysteine 363, cysteine 359-cysteine 373, cysteine 375-cysteine 388, cysteine 394-cysteine 405, cysteine 401-cysteine 415, and cysteine 417-cysteine 430. Serine 441 carries the phosphoserine; by FAM20C modification. Threonine 442 carries the post-translational modification Phosphothreonine; by FAM20C. The stretch at 456 to 480 (DKVSSYLQRLNTKLDDILEKLKINE) forms a coiled coil.

As to quaternary structure, can form homooligomers (monomers, dimers, trimers and tetramers) and heterooligomers with matrilin-1. Interacts with COMP. Component of a complex containing at least CRELD2, MANF, MATN3 and PDIA4. Expressed only in cartilaginous tissues, such as vertebrae, ribs and shoulders.

It localises to the secreted. Its function is as follows. Major component of the extracellular matrix of cartilage and may play a role in the formation of extracellular filamentous networks. The polypeptide is Matrilin-3 (MATN3) (Homo sapiens (Human)).